We begin with the raw amino-acid sequence, 140 residues long: Large ribosomal subunit protein uL11 (140 aa).

The protein belongs to the universal ribosomal protein uL11 family. Part of the ribosomal stalk of the 50S ribosomal subunit. Interacts with L10 and the large rRNA to form the base of the stalk. L10 forms an elongated spine to which L12 dimers bind in a sequential fashion forming a multimeric L10(L12)X complex. Post-translationally, one or more lysine residues are methylated.

In terms of biological role, forms part of the ribosomal stalk which helps the ribosome interact with GTP-bound translation factors. This is Large ribosomal subunit protein uL11 from Syntrophotalea carbinolica (strain DSM 2380 / NBRC 103641 / GraBd1) (Pelobacter carbinolicus).